A 587-amino-acid chain; its full sequence is Lamin-B1 (587 aa).

Over residues 1-11 (MATATPVQQRA) the composition is skewed to polar residues. Residues 1-29 (MATATPVQQRAGSRASAPATPFSPTRLSR) are disordered. The residue at position 2 (A2) is an N-acetylalanine. The tract at residues 2-34 (ATATPVQQRAGSRASAPATPFSPTRLSRLQEKE) is head. Phosphothreonine is present on residues T3 and T5. Position 14 is an omega-N-methylarginine (R14). S16 is subject to Phosphoserine. Phosphothreonine is present on T20. Phosphoserine is present on S23. T25 bears the Phosphothreonine mark. A Phosphoserine modification is found at S28. Residues 32–388 (EKEELRELND…KLLEGEEERL (357 aa)) form the IF rod domain. The segment at 35 to 69 (ELRELNDRLAVYIDKVRSLETENSALQLQVTEREE) is coil 1A. The segment at 70–81 (VRGRELTGLKAL) is linker 1. The tract at residues 82–215 (YETELADARR…EFRKNMYEEE (134 aa)) is coil 1B. Residue K102 forms a Glycyl lysine isopeptide (Lys-Gly) (interchain with G-Cter in SUMO2) linkage. Position 111 is an N6-acetyllysine (K111). A Glycyl lysine isopeptide (Lys-Gly) (interchain with G-Cter in SUMO2) cross-link involves residue K123. At S126 the chain carries Phosphoserine. K145 participates in a covalent cross-link: Glycyl lysine isopeptide (Lys-Gly) (interchain with G-Cter in SUMO2). K157 is modified (N6-acetyllysine; alternate). K157 is covalently cross-linked (Glycyl lysine isopeptide (Lys-Gly) (interchain with G-Cter in SUMO2); alternate). S158 carries the post-translational modification Phosphoserine. K181 is covalently cross-linked (Glycyl lysine isopeptide (Lys-Gly) (interchain with G-Cter in SUMO2)). 2 positions are modified to phosphoserine: S200 and S232. Residues 216–243 (INETRRKHETRLVEVDSGRQIEYEYKLA) are linker 2. Residues K241 and K261 each participate in a glycyl lysine isopeptide (Lys-Gly) (interchain with G-Cter in SUMO2) cross-link. The tract at residues 244–386 (QALHEMREQH…YRKLLEGEEE (143 aa)) is coil 2. K271 bears the N6-acetyllysine; alternate mark. K271 is covalently cross-linked (Glycyl lysine isopeptide (Lys-Gly) (interchain with G-Cter in SUMO2); alternate). S278 and S302 each carry phosphoserine. K312 is covalently cross-linked (Glycyl lysine isopeptide (Lys-Gly) (interchain with G-Cter in SUMO2)). The residue at position 330 (K330) is an N6-acetyllysine; alternate. K330 participates in a covalent cross-link: Glycyl lysine isopeptide (Lys-Gly) (interchain with G-Cter in SUMO2); alternate. 2 positions are modified to phosphoserine: S375 and S393. The tail stretch occupies residues 387–587 (RLKLSPSPSS…RASNKSCAIM (201 aa)). Over residues 390–409 (LSPSPSSRVTVSRASSSRSV) the composition is skewed to low complexity. The segment at 390-432 (LSPSPSSRVTVSRASSSRSVRTTRGKRKRVDVEESEASSSVSI) is disordered. A glycan (O-linked (GlcNAc) threonine) is linked at T399. An Omega-N-methylarginine modification is found at R413. The short motif at 415–420 (KRKRVD) is the Nuclear localization signal element. Residues 430–546 (VSISHSASAT…EEVAQRSTVF (117 aa)) enclose the LTD domain. K483 is subject to N6-acetyllysine. K532 participates in a covalent cross-link: Glycyl lysine isopeptide (Lys-Gly) (interchain with G-Cter in SUMO2). S534 is modified (phosphoserine). K547 participates in a covalent cross-link: Glycyl lysine isopeptide (Lys-Gly) (interchain with G-Cter in SUMO2). Residues 550-587 (IPEEEEEEEEEPIGVPLEEERFHQQGTPRASNKSCAIM) form a disordered region. Residues 551 to 561 (PEEEEEEEEEP) show a composition bias toward acidic residues. Positions 573–587 (QQGTPRASNKSCAIM) are enriched in polar residues. T576 bears the Phosphothreonine mark. C584 carries the cysteine methyl ester modification. C584 carries the S-farnesyl cysteine lipid modification. Positions 585-587 (AIM) are cleaved as a propeptide — removed in mature form.

Belongs to the intermediate filament family. As to quaternary structure, homodimer. Lamin dimers then assemble into dimeric head-to-tail polymers. Ultimately, two head-to-tail polymers assemble laterally into a protofilament with a uniformly shaped rod of 3.5 nm in diameter. Interacts with SPAG4 and SEPT12. Post-translationally, B-type lamins undergo a series of modifications, such as farnesylation and phosphorylation. Increased phosphorylation of the lamins occurs before envelope disintegration and probably plays a role in regulating lamin associations. Phosphorylation plays a key role in lamin organization, subcellular localization and nuclear envelope disintegration. Phosphorylation by CDK1 at Ser-23 and Ser-393 at the onset of mitosis drives lamin disassembly and nuclear envelope breakdown.

It localises to the nucleus lamina. Lamins are intermediate filament proteins that assemble into a filamentous meshwork, and which constitute the major components of the nuclear lamina, a fibrous layer on the nucleoplasmic side of the inner nuclear membrane. Lamins provide a framework for the nuclear envelope, bridging the nuclear envelope and chromatin, thereby playing an important role in nuclear assembly, chromatin organization, nuclear membrane and telomere dynamics. The structural integrity of the lamina is strictly controlled by the cell cycle, as seen by the disintegration and formation of the nuclear envelope in prophase and telophase, respectively. The polypeptide is Lamin-B1 (Lmnb1) (Rattus norvegicus (Rat)).